We begin with the raw amino-acid sequence, 426 residues long: 3',5'-cyclic-nucleotide phosphodiesterase (426 aa).

The tract at residues 210–229 is disordered; it reads DKEDAQHHSNSNSNSNNIWG.

This sequence belongs to the cyclic nucleotide phosphodiesterase class-II family.

The catalysed reaction is a nucleoside 3',5'-cyclic phosphate + H2O = a nucleoside 5'-phosphate + H(+). The sequence is that of 3',5'-cyclic-nucleotide phosphodiesterase (PDE1) from Candida albicans (Yeast).